The following is an 85-amino-acid chain: UPF0386 protein Bind_1628 (85 aa).

Belongs to the UPF0386 family.

The sequence is that of UPF0386 protein Bind_1628 from Beijerinckia indica subsp. indica (strain ATCC 9039 / DSM 1715 / NCIMB 8712).